A 220-amino-acid chain; its full sequence is Deoxyribose-phosphate aldolase 2 (220 aa).

Asp-89 acts as the Proton donor/acceptor in catalysis. Residue Lys-151 is the Schiff-base intermediate with acetaldehyde of the active site. The active-site Proton donor/acceptor is the Lys-180.

It belongs to the DeoC/FbaB aldolase family. DeoC type 1 subfamily.

It localises to the cytoplasm. It catalyses the reaction 2-deoxy-D-ribose 5-phosphate = D-glyceraldehyde 3-phosphate + acetaldehyde. It participates in carbohydrate degradation; 2-deoxy-D-ribose 1-phosphate degradation; D-glyceraldehyde 3-phosphate and acetaldehyde from 2-deoxy-alpha-D-ribose 1-phosphate: step 2/2. In terms of biological role, catalyzes a reversible aldol reaction between acetaldehyde and D-glyceraldehyde 3-phosphate to generate 2-deoxy-D-ribose 5-phosphate. This Staphylococcus aureus (strain COL) protein is Deoxyribose-phosphate aldolase 2.